Consider the following 273-residue polypeptide: Non-homologous end joining protein Ku (273 aa).

The region spanning 13 to 190 (KLSLVTCPVA…FTGIEKKSDA (178 aa)) is the Ku domain. The tract at residues 227-251 (KKKAKKPSKAKASKSTKGDDEEKSN) is disordered. A compositionally biased stretch (basic residues) spans 228–240 (KKAKKPSKAKASK).

Belongs to the prokaryotic Ku family. In terms of assembly, homodimer. Interacts with LigD.

Its function is as follows. With LigD forms a non-homologous end joining (NHEJ) DNA repair enzyme, which repairs dsDNA breaks with reduced fidelity. Binds linear dsDNA with 5'- and 3'- overhangs but not closed circular dsDNA nor ssDNA. Recruits and stimulates the ligase activity of LigD. The polypeptide is Non-homologous end joining protein Ku (Allorhizobium ampelinum (strain ATCC BAA-846 / DSM 112012 / S4) (Agrobacterium vitis (strain S4))).